Here is a 354-residue protein sequence, read N- to C-terminus: Type II secretion system protein K (354 aa).

Positions 1–7 (MSRRQRG) are cleaved as a propeptide — leader sequence. A helical membrane pass occupies residues 8-28 (VALLIVMLMLSLMVTIAASIT). The Periplasmic segment spans residues 29 to 354 (ERSGKAWQRT…QYGGYRTVNP (326 aa)). The tract at residues 114–151 (NVTPNNASGNNTSGNNNAANGSSGNGNSPQPPKVGTSE) is disordered. Residues 118 to 141 (NNASGNNTSGNNNAANGSSGNGNS) show a composition bias toward low complexity.

The protein belongs to the GSP K family. Type II secretion is composed of four main components: the outer membrane complex, the inner membrane complex, the cytoplasmic secretion ATPase and the periplasm-spanning pseudopilus. Interacts with core component OutG. In terms of processing, cleaved by prepilin peptidase.

The protein resides in the cell inner membrane. In terms of biological role, component of the type II secretion system required for the energy-dependent secretion of extracellular factors such as proteases and toxins from the periplasm. Plays a role in pseudopilus assembly and seems to control its length. Interacts with the pseudopilus tip complex that is critical for the recognition and binding of secretion substrates. The polypeptide is Type II secretion system protein K (outK) (Dickeya chrysanthemi (Pectobacterium chrysanthemi)).